Here is a 1287-residue protein sequence, read N- to C-terminus: MRKTPSHTEKKMVYSIRSLKNGTGSVLIGASLVLLAMATPTISSDESTPTTNEPNNRNTTTLAQPLTDTAAGSGKNESDISSPGNANASLEKTEEKPATEPTTPAASPADPAPQTGQDRSSEPTTSTSPVTTETKAEEPIEDNYFRIHVKKLPEENKDAQGLWTWDDVEKPSENWPNGALSFKDAKKDDYGYYLDVKLKGEQAKKISFLINNTAGKNLTGDKSVEKLVPKMNEAWLDQDYKVFSYEPQPAGTVRVNYYRTDGNYDKKSLWYWGDVKNPSSAQWPDGTDFTATGKYGRYIDIPLNEAAREFGFLLLDESKQGDDVKIRKENYKFTDLKNHSQIFLKDDDESIYTNPYYVHDIRMTGAQHVGTSSIESSFSTLVGAKKEDILKHSNITNHLGNKVTITDVAIDEAGKKVTYSGDFSDTKHPYTVSYNSDQFTTKTSWRLKDETYSYDGKLGADLKEEGKQVDLTLWSPSADKVSVVVYDKNDPDKVVGTVALEKGERGTWKQTLDSTNKLGITDFTGYYYQYQIERQGKTVLALDPYAKSLAAWNSDDAKIDDAHKVAKAAFVDPAKLGPQDLTYGKIHNFKTREDAVIYEAHVRDFTSDPAIAKDLTKPFGTFEAFIEKLDYLKDLGVTHIQLLPVLSYYFVNELKNHEHLSDYASSNSNYNWGYDPQNYFSLTGMYSSDPKNPEKRIAEFKNLINEIHKRGMGAILDVVYNHTAKVDIFEDLEPNYYHFMDADGTPRTSFGGGRLGTTHHMTKRLLVDSIKYLVDTYKVDGFRFDMMGDHDAASIEEAYKAARALNPNLIMLGEGWRTYAGDENMPTKAADQDWMKHTDTVAVFSDDIRNNLKSGYPNEGQPAFITGGKRDVNTIFKNLIAQPTNFEADSPGDVIQYIAAHDNLTLFDIIAQSIKKDPSKAENYAEIHRRLRLGNLMVLTAQGTPFIHSGQEYGRTKQFRNPAYRTPVAEDKVPNKSHLLRDKDGNPFDYPYFIHDSYDSSDAVNKFDWTKATDGKAYPENVKSRDYMKGLIALRQSTDAFRLKSLQDIKDRVHLITVPGQNGVEKEDVVIGYQITAPNGDIYAVFVNADEKAREFNLGTAFAHLRNAEVLADENQAGSVGIANPKGLEWTEKGLKLNALTATVLRVSQNGTSHESTAEEKPDSTPSKPEHQNEASHPAHQDPAPEARPDSTKPDAKVADAENKPSQATADSQAEQPAQEAQASSVKEAVRKESVENSSKENISATPDRQAELPNTGIKNENKLLFAGISLLALLGLGFLLKNKKEN.

The first 44 residues, 1–44, serve as a signal peptide directing secretion; the sequence is MRKTPSHTEKKMVYSIRSLKNGTGSVLIGASLVLLAMATPTISS. The tract at residues 42–139 is disordered; sequence ISSDESTPTT…VTTETKAEEP (98 aa). Over residues 48-61 the composition is skewed to low complexity; it reads TPTTNEPNNRNTTT. Polar residues predominate over residues 79–90; it reads DISSPGNANASL. Low complexity-rich tracts occupy residues 99–113 and 122–133; these read TEPT…DPAP and EPTTSTSPVTTE. Substrate is bound by residues 163–165, Trp175, Asp221, 270–272, Trp283, Lys325, and Asn330; these read WTW and WYW. 2 residues coordinate Ca(2+): Ser668 and Tyr670. Substrate contacts are provided by residues 674–675 and Phe750; that span reads YD. The active-site Nucleophile is the Asp785. Glu814 (proton donor) is an active-site residue. Position 816 (Trp816) interacts with substrate. Ca(2+)-binding residues include Met835, Thr838, and Asp839. The substrate site is built by Asp846, Arg849, and Tyr856. Asp889 and Asp893 together coordinate Ca(2+). Residues Asn903, Lys976, and 996-998 contribute to the substrate site; that span reads DSY. Residue Asp999 coordinates Ca(2+). The disordered stretch occupies residues 1147-1255; sequence VSQNGTSHES…TPDRQAELPN (109 aa). Basic and acidic residues predominate over residues 1156–1203; sequence STAEEKPDSTPSKPEHQNEASHPAHQDPAPEARPDSTKPDAKVADAEN. Low complexity predominate over residues 1212–1225; sequence SQAEQPAQEAQASS. The segment covering 1228-1239 has biased composition (basic and acidic residues); the sequence is EAVRKESVENSS. An LPXTG sorting signal motif is present at residues 1253-1257; the sequence is LPNTG. Thr1256 carries the pentaglycyl murein peptidoglycan amidated threonine modification. Positions 1257 to 1287 are cleaved as a propeptide — removed by sortase; sequence GIKNENKLLFAGISLLALLGLGFLLKNKKEN.

This sequence belongs to the glycosyl hydrolase 13 family.

Its subcellular location is the secreted. The protein resides in the cell wall. The protein localises to the cell surface. It catalyses the reaction Hydrolysis of (1-&gt;6)-alpha-D-glucosidic linkages in pullulan, amylopectin and glycogen, and in the alpha- and beta-limit dextrins of amylopectin and glycogen.. Its activity is regulated as follows. Inhibited by 4-O-alpha-D-glucopyranosylmoranoline (G1M). Its function is as follows. Virulence factor. Involved in the degradation of glycogen of the mammalian host cells. Hydrolyzes the alpha-1,6-branchpoints of glycogen. Hydrolyzes pullulan. Does not hydrolyze dextran. Binds to mouse lung alveolar type II cells that are rich in glycogen stores. Is an alpha-glucan-specific carbohydrate-binding protein, which binds to amylose (pure alpha-(1,4)-linked glucose), amylopectin (alpha-(1,4)-linked glucose with alpha-(1,6) branch points), pullulan (linear polymer of mixed alpha-(1,4)- and alpha-(1,6)-linked glucose) and glycogen (similar to amylopectin with more frequent alpha-(1,6) branch points) in vitro. Does not bind to dextran (a linear polymer of alpha-(1,6)-linked glucose). The sequence is that of Pullulanase A from Streptococcus pneumoniae.